A 170-amino-acid chain; its full sequence is Cytidine diphosphoramidate kinase (170 aa).

The protein belongs to the APS kinase family.

It carries out the reaction cytidine 5'-diphosphoramidate + ATP = cytidine 3'-phospho-5'-diphosphoramidate + ADP + H(+). It functions in the pathway capsule biogenesis; capsule polysaccharide biosynthesis. In terms of biological role, involved in the biosynthesis of the O-methyl phosphoramidate (MeOPN) group found on the capsular polysaccharide (CPS) of C.jejuni. Catalyzes the ATP-dependent phosphorylation of cytidine diphosphoramidate (CDP-NH(2)) to form cytidine 3'-phosphate 5'-diphosphoramidate. Can also use other substrates such as the corresponding adenine and uridine diphosphoramidate derivatives or cytidine diphosphoramidate analogs, with lower efficiency. The protein is Cytidine diphosphoramidate kinase of Campylobacter jejuni subsp. jejuni serotype O:2 (strain ATCC 700819 / NCTC 11168).